The chain runs to 424 residues: Dihydroorotase (424 aa).

Histidine 61 and histidine 63 together coordinate Zn(2+). Substrate is bound by residues 63–65 (HLR) and asparagine 95. Zn(2+)-binding residues include aspartate 153, histidine 180, and histidine 233. Residue asparagine 279 coordinates substrate. Aspartate 306 contributes to the Zn(2+) binding site. The active site involves aspartate 306. Position 310 (histidine 310) interacts with substrate.

This sequence belongs to the metallo-dependent hydrolases superfamily. DHOase family. Class I DHOase subfamily. It depends on Zn(2+) as a cofactor.

The enzyme catalyses (S)-dihydroorotate + H2O = N-carbamoyl-L-aspartate + H(+). The protein operates within pyrimidine metabolism; UMP biosynthesis via de novo pathway; (S)-dihydroorotate from bicarbonate: step 3/3. In terms of biological role, catalyzes the reversible cyclization of carbamoyl aspartate to dihydroorotate. This is Dihydroorotase from Citrifermentans bemidjiense (strain ATCC BAA-1014 / DSM 16622 / JCM 12645 / Bem) (Geobacter bemidjiensis).